Reading from the N-terminus, the 187-residue chain is Elongation factor P 1 (187 aa).

This sequence belongs to the elongation factor P family.

The protein localises to the cytoplasm. Its pathway is protein biosynthesis; polypeptide chain elongation. Functionally, involved in peptide bond synthesis. Stimulates efficient translation and peptide-bond synthesis on native or reconstituted 70S ribosomes in vitro. Probably functions indirectly by altering the affinity of the ribosome for aminoacyl-tRNA, thus increasing their reactivity as acceptors for peptidyl transferase. The polypeptide is Elongation factor P 1 (Geobacter sulfurreducens (strain ATCC 51573 / DSM 12127 / PCA)).